The primary structure comprises 246 residues: 2-C-methyl-D-erythritol 4-phosphate cytidylyltransferase (246 aa).

It belongs to the IspD/TarI cytidylyltransferase family. IspD subfamily.

The enzyme catalyses 2-C-methyl-D-erythritol 4-phosphate + CTP + H(+) = 4-CDP-2-C-methyl-D-erythritol + diphosphate. Its pathway is isoprenoid biosynthesis; isopentenyl diphosphate biosynthesis via DXP pathway; isopentenyl diphosphate from 1-deoxy-D-xylulose 5-phosphate: step 2/6. Functionally, catalyzes the formation of 4-diphosphocytidyl-2-C-methyl-D-erythritol from CTP and 2-C-methyl-D-erythritol 4-phosphate (MEP). The sequence is that of 2-C-methyl-D-erythritol 4-phosphate cytidylyltransferase from Chlorobaculum tepidum (strain ATCC 49652 / DSM 12025 / NBRC 103806 / TLS) (Chlorobium tepidum).